The primary structure comprises 908 residues: Protein translocase subunit SecA (908 aa).

ATP-binding positions include Gln87, 105–109 (GEGKT), and Asp512. The segment at 865-908 (GGDDGSDEMMAHTPMIRDGDKVGRNDPCPCGSGRKYKQCHGKLS) is disordered. The segment covering 879–888 (MIRDGDKVGR) has biased composition (basic and acidic residues). 4 residues coordinate Zn(2+): Cys892, Cys894, Cys903, and His904. Basic residues predominate over residues 898-908 (RKYKQCHGKLS).

This sequence belongs to the SecA family. Monomer and homodimer. Part of the essential Sec protein translocation apparatus which comprises SecA, SecYEG and auxiliary proteins SecDF-YajC and YidC. The cofactor is Zn(2+).

Its subcellular location is the cell inner membrane. It is found in the cytoplasm. The enzyme catalyses ATP + H2O + cellular proteinSide 1 = ADP + phosphate + cellular proteinSide 2.. Its function is as follows. Part of the Sec protein translocase complex. Interacts with the SecYEG preprotein conducting channel. Has a central role in coupling the hydrolysis of ATP to the transfer of proteins into and across the cell membrane, serving both as a receptor for the preprotein-SecB complex and as an ATP-driven molecular motor driving the stepwise translocation of polypeptide chains across the membrane. The sequence is that of Protein translocase subunit SecA from Shewanella sp. (strain ANA-3).